The sequence spans 222 residues: 7-cyano-7-deazaguanine synthase (222 aa).

Residue 8–18 participates in ATP binding; sequence LSGGMDSTTLA. The Zn(2+) site is built by cysteine 188, cysteine 196, cysteine 199, and cysteine 202.

Belongs to the QueC family. Zn(2+) serves as cofactor.

It carries out the reaction 7-carboxy-7-deazaguanine + NH4(+) + ATP = 7-cyano-7-deazaguanine + ADP + phosphate + H2O + H(+). Its pathway is purine metabolism; 7-cyano-7-deazaguanine biosynthesis. Its function is as follows. Catalyzes the ATP-dependent conversion of 7-carboxy-7-deazaguanine (CDG) to 7-cyano-7-deazaguanine (preQ(0)). The protein is 7-cyano-7-deazaguanine synthase of Methanoculleus marisnigri (strain ATCC 35101 / DSM 1498 / JR1).